Consider the following 219-residue polypeptide: ATP-dependent dethiobiotin synthetase BioD (219 aa).

Residue 12–17 (EVGKTY) coordinates ATP. Residue T16 coordinates Mg(2+). Residue K37 is part of the active site. Substrate is bound at residue S41. Residues D52, 114-117 (EGAG), and 174-175 (NC) contribute to the ATP site. Positions 52 and 114 each coordinate Mg(2+).

Belongs to the dethiobiotin synthetase family. Homodimer. The cofactor is Mg(2+).

It localises to the cytoplasm. The enzyme catalyses (7R,8S)-7,8-diammoniononanoate + CO2 + ATP = (4R,5S)-dethiobiotin + ADP + phosphate + 3 H(+). It functions in the pathway cofactor biosynthesis; biotin biosynthesis; biotin from 7,8-diaminononanoate: step 1/2. Its function is as follows. Catalyzes a mechanistically unusual reaction, the ATP-dependent insertion of CO2 between the N7 and N8 nitrogen atoms of 7,8-diaminopelargonic acid (DAPA, also called 7,8-diammoniononanoate) to form a ureido ring. The polypeptide is ATP-dependent dethiobiotin synthetase BioD (Francisella tularensis subsp. holarctica (strain FTNF002-00 / FTA)).